The primary structure comprises 168 residues: Segregation and condensation protein B (168 aa).

The protein belongs to the ScpB family. In terms of assembly, homodimer. Homodimerization may be required to stabilize the binding of ScpA to the Smc head domains. Component of a cohesin-like complex composed of ScpA, ScpB and the Smc homodimer, in which ScpA and ScpB bind to the head domain of Smc. The presence of the three proteins is required for the association of the complex with DNA.

The protein resides in the cytoplasm. Its function is as follows. Participates in chromosomal partition during cell division. May act via the formation of a condensin-like complex containing Smc and ScpA that pull DNA away from mid-cell into both cell halves. This is Segregation and condensation protein B from Caldanaerobacter subterraneus subsp. tengcongensis (strain DSM 15242 / JCM 11007 / NBRC 100824 / MB4) (Thermoanaerobacter tengcongensis).